We begin with the raw amino-acid sequence, 212 residues long: Adenylate kinase (212 aa).

ATP is bound at residue 14–19; it reads GSGKGT. An NMP region spans residues 34-63; sequence STGDLFRKKISEDSRFAAQIQNYLSSGSYV. AMP contacts are provided by residues Thr-35, Arg-40, 61–63, 89–92, and Gln-96; these read SYV and GYPR. The LID stretch occupies residues 126–163; it reads QRLFCQKCQKSYNLLLAKPKNGLKCDLDNTDLITRNDD. Position 127 (Arg-127) interacts with ATP. Zn(2+) is bound by residues Cys-130 and Cys-133. 136-137 contacts ATP; that stretch reads SY. Zn(2+) is bound by residues Cys-150 and Asp-153. Positions 160 and 171 each coordinate AMP. Gln-199 contacts ATP.

This sequence belongs to the adenylate kinase family. Monomer.

It is found in the cytoplasm. The catalysed reaction is AMP + ATP = 2 ADP. It participates in purine metabolism; AMP biosynthesis via salvage pathway; AMP from ADP: step 1/1. Functionally, catalyzes the reversible transfer of the terminal phosphate group between ATP and AMP. Plays an important role in cellular energy homeostasis and in adenine nucleotide metabolism. This is Adenylate kinase from Mesomycoplasma hyopneumoniae (strain 232) (Mycoplasma hyopneumoniae).